Consider the following 121-residue polypeptide: Putative iron-sulfur cluster insertion protein ErpA (121 aa).

Residues C49, C113, and C115 each coordinate iron-sulfur cluster.

It belongs to the HesB/IscA family. In terms of assembly, homodimer. Iron-sulfur cluster is required as a cofactor.

Required for insertion of 4Fe-4S clusters. The polypeptide is Putative iron-sulfur cluster insertion protein ErpA (Polaromonas sp. (strain JS666 / ATCC BAA-500)).